Here is a 312-residue protein sequence, read N- to C-terminus: Beta-ketoacyl-[acyl-carrier-protein] synthase III 1 (312 aa).

Catalysis depends on residues Cys113 and His237. Residues 238 to 242 form an ACP-binding region; sequence QANIR. Asn267 is an active-site residue.

The protein belongs to the thiolase-like superfamily. FabH family. In terms of assembly, homodimer.

It is found in the cytoplasm. It catalyses the reaction malonyl-[ACP] + acetyl-CoA + H(+) = 3-oxobutanoyl-[ACP] + CO2 + CoA. It participates in lipid metabolism; fatty acid biosynthesis. Catalyzes the condensation reaction of fatty acid synthesis by the addition to an acyl acceptor of two carbons from malonyl-ACP. Catalyzes the first condensation reaction which initiates fatty acid synthesis and may therefore play a role in governing the total rate of fatty acid production. Possesses both acetoacetyl-ACP synthase and acetyl transacylase activities. Its substrate specificity determines the biosynthesis of branched-chain and/or straight-chain of fatty acids. The protein is Beta-ketoacyl-[acyl-carrier-protein] synthase III 1 of Halalkalibacterium halodurans (strain ATCC BAA-125 / DSM 18197 / FERM 7344 / JCM 9153 / C-125) (Bacillus halodurans).